Here is a 113-residue protein sequence, read N- to C-terminus: Integration host factor subunit alpha (113 aa).

Residues 87 to 113 are disordered; the sequence is NALNGEVSDETTEGADDDDDEEGEGDE. Over residues 93–113 the composition is skewed to acidic residues; it reads VSDETTEGADDDDDEEGEGDE.

Belongs to the bacterial histone-like protein family. In terms of assembly, heterodimer of an alpha and a beta chain.

Its function is as follows. This protein is one of the two subunits of integration host factor, a specific DNA-binding protein that functions in genetic recombination as well as in transcriptional and translational control. The polypeptide is Integration host factor subunit alpha (Anaeromyxobacter dehalogenans (strain 2CP-1 / ATCC BAA-258)).